The primary structure comprises 129 residues: Small ribosomal subunit protein uS11 (129 aa).

Belongs to the universal ribosomal protein uS11 family. As to quaternary structure, part of the 30S ribosomal subunit. Interacts with proteins S7 and S18. Binds to IF-3.

Its function is as follows. Located on the platform of the 30S subunit, it bridges several disparate RNA helices of the 16S rRNA. Forms part of the Shine-Dalgarno cleft in the 70S ribosome. The polypeptide is Small ribosomal subunit protein uS11 (Azoarcus sp. (strain BH72)).